We begin with the raw amino-acid sequence, 250 residues long: ATP synthase subunit a (250 aa).

6 helical membrane passes run 29-49 (ASLF…FATS), 84-104 (FFPM…LGMM), 114-134 (IVVT…YGFY), 143-163 (LFVP…IEVI), 189-209 (VFAG…GGAL), and 216-236 (VALT…FAVL).

The protein belongs to the ATPase A chain family. F-type ATPases have 2 components, CF(1) - the catalytic core - and CF(0) - the membrane proton channel. CF(1) has five subunits: alpha(3), beta(3), gamma(1), delta(1), epsilon(1). CF(0) has three main subunits: a(1), b(2) and c(9-12). The alpha and beta chains form an alternating ring which encloses part of the gamma chain. CF(1) is attached to CF(0) by a central stalk formed by the gamma and epsilon chains, while a peripheral stalk is formed by the delta and b chains.

The protein resides in the cell inner membrane. Its function is as follows. Key component of the proton channel; it plays a direct role in the translocation of protons across the membrane. This is ATP synthase subunit a from Allorhizobium ampelinum (strain ATCC BAA-846 / DSM 112012 / S4) (Agrobacterium vitis (strain S4)).